The chain runs to 204 residues: Protease (204 aa).

Active-site residues include His54, Asp71, and Cys121.

It belongs to the peptidase C5 family. In terms of assembly, interacts with protease cofactor pVI-C; this interaction is necessary for protease activation.

It localises to the virion. It is found in the host nucleus. It carries out the reaction Cleaves proteins of the adenovirus and its host cell at two consensus sites: -Yaa-Xaa-Gly-Gly-|-Xaa- and -Yaa-Xaa-Gly-Xaa-|-Gly- (in which Yaa is Met, Ile or Leu, and Xaa is any amino acid).. With respect to regulation, requires DNA and protease cofactor for maximal activation. Inside nascent virions, becomes partially activated by binding to the viral DNA, allowing it to cleave the cofactor that binds to the protease and fully activates it. Actin, like the viral protease cofactor, seems to act as a cofactor in the cleavage of cytokeratin 18 and of actin itself. Functionally, cleaves viral precursor proteins (pTP, pIIIa, pVI, pVII, pVIII, and pX) inside newly assembled particles giving rise to mature virions. Protease complexed to its cofactor slides along the viral DNA to specifically locate and cleave the viral precursors. Mature virions have a weakened organization compared to the unmature virions, thereby facilitating subsequent uncoating. Without maturation, the particle lacks infectivity and is unable to uncoat. Late in adenovirus infection, in the cytoplasm, may participate in the cytoskeleton destruction. Cleaves host cell cytoskeletal keratins K7 and K18. The protein is Protease of Frog adenovirus 1 (strain ATCC VR-896) (FrAdV-1).